We begin with the raw amino-acid sequence, 153 residues long: UPF0756 membrane protein LCABL_15860 (153 aa).

4 consecutive transmembrane segments (helical) span residues 4–24 (WLFL…SLII), 52–72 (WGVT…EIGF), 85–105 (WIAI…VGLL), and 115–135 (LVFG…GPVI).

It belongs to the UPF0756 family.

It localises to the cell membrane. In Lacticaseibacillus casei (strain BL23) (Lactobacillus casei), this protein is UPF0756 membrane protein LCABL_15860.